Consider the following 180-residue polypeptide: Major urinary protein 2 (180 aa).

A signal peptide spans Met1–Ala18. Residues Cys82 and Cys175 are joined by a disulfide bond.

The protein belongs to the calycin superfamily. Lipocalin family. Abundant in the urine of adult male mice but absent from that of females.

It localises to the secreted. Its function is as follows. Binds pheromones that are released from drying urine of males. These pheromones affect the sexual behavior of females. In Mus musculus (Mouse), this protein is Major urinary protein 2 (Mup2).